Here is a 407-residue protein sequence, read N- to C-terminus: tRNA(Ile)-lysidine synthase (407 aa).

Residue 36–41 (SGGRDS) coordinates ATP.

Belongs to the tRNA(Ile)-lysidine synthase family.

Its subcellular location is the cytoplasm. The catalysed reaction is cytidine(34) in tRNA(Ile2) + L-lysine + ATP = lysidine(34) in tRNA(Ile2) + AMP + diphosphate + H(+). Functionally, ligates lysine onto the cytidine present at position 34 of the AUA codon-specific tRNA(Ile) that contains the anticodon CAU, in an ATP-dependent manner. Cytidine is converted to lysidine, thus changing the amino acid specificity of the tRNA from methionine to isoleucine. The chain is tRNA(Ile)-lysidine synthase from Tropheryma whipplei (strain TW08/27) (Whipple's bacillus).